Here is a 1398-residue protein sequence, read N- to C-terminus: DNA-directed RNA polymerase subunit beta' (1398 aa).

Zn(2+) is bound by residues C71, C73, C86, and C89. Mg(2+) is bound by residues D462, D464, and D466. Residues C810, C883, C890, and C893 each contribute to the Zn(2+) site. Residues E1377–E1398 are disordered. Residues A1380–P1392 are compositionally biased toward low complexity.

Belongs to the RNA polymerase beta' chain family. In terms of assembly, the RNAP catalytic core consists of 2 alpha, 1 beta, 1 beta' and 1 omega subunit. When a sigma factor is associated with the core the holoenzyme is formed, which can initiate transcription. Mg(2+) serves as cofactor. Requires Zn(2+) as cofactor.

It carries out the reaction RNA(n) + a ribonucleoside 5'-triphosphate = RNA(n+1) + diphosphate. In terms of biological role, DNA-dependent RNA polymerase catalyzes the transcription of DNA into RNA using the four ribonucleoside triphosphates as substrates. The polypeptide is DNA-directed RNA polymerase subunit beta' (Bradyrhizobium diazoefficiens (strain JCM 10833 / BCRC 13528 / IAM 13628 / NBRC 14792 / USDA 110)).